Consider the following 1726-residue polypeptide: Merozoite surface protein 1 (1726 aa).

The N-terminal stretch at 1 to 19 (MKIIFFLCSFLFFIINTQC) is a signal peptide. Residues 61-124 (KGASAQSGTS…SGTSGTSPSS (64 aa)) are compositionally biased toward low complexity. Residues 61–149 (KGASAQSGTS…PPADASDSDA (89 aa)) form a disordered region. The segment covering 125-134 (RSNTLPRSNT) has biased composition (polar residues). Asparagine 133 carries an N-linked (GlcNAc...) asparagine glycan. The span at 135 to 144 (SSGASPPADA) shows a compositional bias: low complexity. N-linked (GlcNAc...) asparagine glycosylation is found at asparagine 272, asparagine 501, asparagine 567, and asparagine 638. The interval 735-771 (SETTEDGGHSTHTLSQSGETEVTEETEETEETVGHTT) is disordered. Over residues 755-765 (EVTEETEETEE) the composition is skewed to acidic residues. N-linked (GlcNAc...) asparagine glycans are attached at residues asparagine 827, asparagine 924, asparagine 944, asparagine 990, asparagine 1016, asparagine 1114, and asparagine 1221. A compositionally biased stretch (low complexity) spans 914–952 (TGTSSTSSPGNTTVNTAQSATHSNSQNQQSNASSTNTQN). The interval 914 to 961 (TGTSSTSSPGNTTVNTAQSATHSNSQNQQSNASSTNTQNGVAVSSGPA) is disordered. 2 disordered regions span residues 1254 to 1284 (VTPP…TQIP) and 1476 to 1497 (KEKF…DEQK). Residues 1270-1284 (VSGSSGSTKEETQIP) show a composition bias toward polar residues. Pro residues predominate over residues 1481-1490 (SSPPTTPPSP). Asparagine 1613 carries an N-linked (GlcNAc...) asparagine glycan. EGF-like domains follow at residues 1617 to 1657 (HQCV…VENP) and 1658 to 1705 (NPTC…IFCS). 6 cysteine pairs are disulfide-bonded: cysteine 1619-cysteine 1630, cysteine 1624-cysteine 1640, cysteine 1642-cysteine 1653, cysteine 1661-cysteine 1674, cysteine 1668-cysteine 1688, and cysteine 1690-cysteine 1704. A lipid anchor (GPI-anchor amidated serine) is attached at serine 1705. Residues 1706–1726 (SSNFLGISFLLILMLILYSFI) constitute a propeptide, removed in mature form.

As to quaternary structure, forms a complex composed of subunits p83, p30, p38, and p42 which remain non-covalently associated; the complex is formed at the merozoite surface prior to egress from host erythrocytes. Forms a complex composed of processed MSP1 subunits, MSP6 subunit p36 and MSP7; the complex is formed at the merozoite surface prior to egress from host erythrocytes. Within the complex, interacts (via subunit p38) with MSP6 subunit p36 and (via subunits p83, p30 and p38) with MSP7 (via subunit p22). Forms a complex composed of MSP1, MSP6, DBLMSP1 and DBLMSP2. Within the complex, interacts (via subunit p38) with DBLMSP1 and DBLMSP2. Forms a complex composed of MSP1, and rhoptry proteins RhopH3, RAP1 and CLAG9/RhopH3. Within the complex, interacts (via subunits p42 and p19) with RhopH3 (via C-terminus). Forms a complex composed of MSP1, MSP6, MSP7, MSP9 and MSP3; within the complex, MSP6 and MSP9 mediate the binding to the host erythrocyte. Interacts (via subunits p19 and p42) with MSP9; the interaction is direct; MSP1 subunits p19 or p42, and MSP9 form a co-ligand complex that interacts with host SLC4A1/Band 3 protein. May interact with PFD6. Interacts with host spectrin. Interacts with host glycophorin GYPA in a sialic acid-independent manner. In terms of assembly, interacts with host proinflammatory cytokine S100P; the interaction blocks S100P inflammatory and chemotactic activities. As to quaternary structure, interacts with host SLC4A1/Band 3 (via 5ABC region) on the host erythrocyte surface in a sialic acid-independent manner. The p190 precursor is cleaved by SUB1 prior to merozoite egress into 4 subunits p83, p30, p38, and p42 which remain non-covalently associated. SUB1-mediated proteolytic cleavage occurs in an orderly manner; the first cleavage occurs at the p30/p38 site, followed by cleavage at the p83/p30 site, the last cleavage occurs at the p38/p42 site. The order of cleavage is essential for parasite viability. SUB1-mediated processing is essential for merozoite egress. In a second processing step during erythrocyte invasion, p42 is cleaved by SUB2 into p33 and p19; the latter remains attached to the merozoite surface via its GPI-anchor and is endocytosed during the subsequent ring stage.

The protein localises to the cell membrane. The protein resides in the secreted. Its subcellular location is the vacuole membrane. Functionally, during the asexual blood stage, involved in merozoite egress from host erythrocytes possibly via its interaction with the host cytoskeleton protein spectrin resulting in the destabilization of the host cytoskeleton and thus leading to erythrocyte cell membrane rupture. Involved in the binding to host erythrocytes and is required for host erythrocyte invasion. Its function is as follows. By binding to host proinflammatory cytokine S100P may interfere with host immune responses. Involved in merozoite invasion of host erythrocytes. May play a role in the biogenesis and/or function of the food vacuole during the intraerythrocytic development. The sequence is that of Merozoite surface protein 1 from Plasmodium falciparum (isolate Palo Alto / Uganda).